A 351-amino-acid polypeptide reads, in one-letter code: Caveolin-2 (351 aa).

Over residues 1–14 (MTRQNTSESDNTQR) the composition is skewed to polar residues. Disordered regions lie at residues 1-55 (MTRQ…QGIA), 71-93 (HRTSLNQEVPTPQRRSHPQYDNL), and 144-193 (QKGS…PEME). Topologically, residues 1-261 (MTRQNTSESD…FEIVRIYSYK (261 aa)) are cytoplasmic. The segment covering 22-31 (TVDDIDELTD) has biased composition (acidic residues). Residues 38–51 (HHHHHHHHEHHHQH) are compositionally biased toward basic residues. Residues 167–184 (PAQQSAPPTQQSRPQTTS) show a composition bias toward low complexity. Positions 262–290 (ILTLIFGLIIAFLGGILFALFAFLNIWIF) form an intramembrane region, helical. Residues 291–351 (RPILILTRMA…EVWEKHIHHV (61 aa)) lie on the Cytoplasmic side of the membrane.

The protein belongs to the caveolin family. Homooligomer. Expressed in intracellular bodies in intestinal cells.

It is found in the golgi apparatus membrane. The protein resides in the cell membrane. It localises to the membrane. Its subcellular location is the caveola. The protein localises to the apical cell membrane. In terms of biological role, may act as a scaffolding protein within caveolar membranes. Interacts directly with G-protein alpha subunits and can regulate their activity. Thought to have a role in the uptake of lipids and proteins in the intestinal cells; operates in the apical uptake of lipid markers and trafficking of yolk proteins. Affects fecundity and egg laying. This Caenorhabditis elegans protein is Caveolin-2 (cav-2).